We begin with the raw amino-acid sequence, 419 residues long: Oligouridylate-binding protein 1B (419 aa).

2 RRM domains span residues 54-128 and 139-217; these read RSVY…WAYA and FNIF…WATK. Residues 217–257 are disordered; it reads KGATSGEDKQSSDSKSVVELTSGVSEDGKDTTNGEAPENNA. S241 is modified (phosphoserine). Positions 260 to 335 constitute an RRM 3 domain; sequence TTVYVGNLAP…RQMKCSWGSK (76 aa).

In terms of assembly, interacts with UBA1A and UBA2A.

The protein localises to the nucleus. Its function is as follows. Heterogeneous nuclear ribonucleoprotein (hnRNP)-like protein that acts as a component of the pre-mRNA processing machinery. Functions to facilitate the nuclear maturation of plant pre-mRNAs. The sequence is that of Oligouridylate-binding protein 1B (UBP1B) from Arabidopsis thaliana (Mouse-ear cress).